The chain runs to 719 residues: MIVDKLLDDSRGGEGLLDAAGDCGLMTSPLNLAYFYGASPPAAAPGACDGGCSASGPSAPGSPGSDSSDFSSASSVSSCGAVESRPRGGARAERLQVEPHMGVVRQQRGPFQGVRVKNSVKELLLHIRSHKQKASGQAVDDFKTQSVNREQFTELKNTVSYSGKRKGSDSLSDGPACKRSALLHTQFLTPPQTPTPAESMEDVHHNESKQDSCADLLQNIINIKNECSPVSLNTVQVSWMSPGEVPQGSPHEQCQDLHRGQVFSPPQKYQPFQVSSSPHMMDQASMYQYSPQNQSVQPPPQHYTHNPALEYSPYSRTSQSPSYEPHLFGREPQFCPDQSFAPLLSDPRQSENIAVPPQTAPSVQQQIDTHLQNFSLMPPDTCEALARPDASSTPLSTPLPFPNLGGNPMSTTQLGKSFFQWQVEQEENKLANISQDQFLSKDADGDTFLHIAVAQGRRALSYVLARKMNALHMLDIKEHNGQSAFQVAVAANQHLIVQDLVTLGAQVNTTDCWGRTPLHVCAEKGHSQVLQAIQKGAAGSNQFVDLEATNYDGLTPLHCAVLAHNAVVHELQRNQQPHSPEVQELLLKNKSLVDTIKCLIQMGAAVEAKDRKSGRTALHLAAEEANLELIRLFLELPSCLSFVNAKAYNGNTALHVAASLQYRVTQLDAVRLLMRKGADPSTRNLENEQPVHLVPDGPVGEQIRRILKGKSIQQRAPPY.

Over residues 46-81 (GACDGGCSASGPSAPGSPGSDSSDFSSASSVSSCGA) the composition is skewed to low complexity. The disordered stretch occupies residues 46-97 (GACDGGCSASGPSAPGSPGSDSSDFSSASSVSSCGAVESRPRGGARAERLQV). Positions 84–97 (SRPRGGARAERLQV) are enriched in basic and acidic residues. The region spanning 108 to 130 (RGPFQGVRVKNSVKELLLHIRSH) is the OCA domain. The short motif at 164-179 (KRKGSDSLSDGPACKR) is the Nuclear localization signal element. Disordered regions lie at residues 188-210 (LTPP…ESKQ) and 289-343 (YSPQ…FAPL). Basic and acidic residues predominate over residues 201-210 (EDVHHNESKQ). A required for transcriptional activity region spans residues 322–394 (SYEPHLFGRE…LARPDASSTP (73 aa)). The interaction with NFKB1/p50 stretch occupies residues 405-719 (GGNPMSTTQL…KSIQQRAPPY (315 aa)). ANK repeat units lie at residues 444–473 (DGDT…ALHM), 480–509 (NGQS…QVNT), 513–542 (WGRT…GSNQ), 552–581 (DGLT…HSPE), 583–608 (QELL…AVEA), 613–642 (SGRT…CLSF), and 649–682 (NGNT…DPST).

In terms of assembly, interacts with NFKB1/p50. Interacts with RELA. Interacts with AKIRIN2.

Its subcellular location is the nucleus. Involved in regulation of NF-kappa-B transcription factor complexes. Inhibits NF-kappa-B activity without affecting its nuclear translocation upon stimulation. Inhibits DNA-binding of RELA and NFKB1/p50, and of the NF-kappa-B p65-p50 heterodimer and the NF-kappa-B p50-p50 homodimer. Also seems to activate NF-kappa-B-mediated transcription. In vitro, upon association with NFKB1/p50 has transcriptional activation activity and, together with NFKB1/p50 and RELA, is recruited to LCN2 promoters. Promotes transcription of LCN2 and DEFB4. Is recruited to IL-6 promoters and activates IL-6 but decreases TNF-alpha production in response to LPS. Seems to be involved in the induction of inflammatory genes activated through TLR/IL-1 receptor signaling. Involved in the induction of T helper 17 cells (Th17) differentiation upon recognition of antigen by T cell antigen receptor (TCR). This Bos taurus (Bovine) protein is NF-kappa-B inhibitor zeta (NFKBIZ).